The sequence spans 175 residues: Probable chemoreceptor glutamine deamidase CheD (175 aa).

The protein belongs to the CheD family.

It catalyses the reaction L-glutaminyl-[protein] + H2O = L-glutamyl-[protein] + NH4(+). Probably deamidates glutamine residues to glutamate on methyl-accepting chemotaxis receptors (MCPs), playing an important role in chemotaxis. The polypeptide is Probable chemoreceptor glutamine deamidase CheD (Jannaschia sp. (strain CCS1)).